The primary structure comprises 287 residues: Bifunctional protein FolD (287 aa).

Residues 165 to 167 (GRS), Ser190, and Ile231 each bind NADP(+).

It belongs to the tetrahydrofolate dehydrogenase/cyclohydrolase family. As to quaternary structure, homodimer.

The enzyme catalyses (6R)-5,10-methylene-5,6,7,8-tetrahydrofolate + NADP(+) = (6R)-5,10-methenyltetrahydrofolate + NADPH. It carries out the reaction (6R)-5,10-methenyltetrahydrofolate + H2O = (6R)-10-formyltetrahydrofolate + H(+). The protein operates within one-carbon metabolism; tetrahydrofolate interconversion. Its function is as follows. Catalyzes the oxidation of 5,10-methylenetetrahydrofolate to 5,10-methenyltetrahydrofolate and then the hydrolysis of 5,10-methenyltetrahydrofolate to 10-formyltetrahydrofolate. This chain is Bifunctional protein FolD, found in Carboxydothermus hydrogenoformans (strain ATCC BAA-161 / DSM 6008 / Z-2901).